Here is a 122-residue protein sequence, read N- to C-terminus: Large ribosomal subunit protein uL14 (122 aa).

This sequence belongs to the universal ribosomal protein uL14 family. In terms of assembly, part of the 50S ribosomal subunit. Forms a cluster with proteins L3 and L19. In the 70S ribosome, L14 and L19 interact and together make contacts with the 16S rRNA in bridges B5 and B8.

In terms of biological role, binds to 23S rRNA. Forms part of two intersubunit bridges in the 70S ribosome. In Mycoplasma pneumoniae (strain ATCC 29342 / M129 / Subtype 1) (Mycoplasmoides pneumoniae), this protein is Large ribosomal subunit protein uL14.